The sequence spans 118 residues: Succinate dehydrogenase assembly factor 1, mitochondrial (118 aa).

Positions 14–16 match the LYR motif 1; required for interaction with HSC20 motif; sequence LYR. Residues 53-55 carry the LYR motif 2; not required for interaction with HSC20 motif; it reads LYR. Residues 53 to 65 form an interaction with SDHB region; that stretch reads LYRRGRRQLQLLR. The segment at 68 to 118 is disordered; sequence HATAMGTFVRPRGPAEEPGDATAPGTRLDDGGAPKNSCEDTGARETRSDGR. Residues 94–118 show a composition bias toward basic and acidic residues; it reads RLDDGGAPKNSCEDTGARETRSDGR.

Belongs to the complex I LYR family. SDHAF1 subfamily. In terms of assembly, interacts with SDHB within an SDHA-SDHB subcomplex. Also interacts with the iron-sulfur transfer complex formed by HSC20, HSPA9 and ISCU through direct binding to HSC20. Binding of SDHAF1 to SDHB precedes and is necessary for recruitment of the iron-sulfur transfer complex by SDHAF1.

Its subcellular location is the mitochondrion matrix. Functionally, plays an essential role in the assembly of succinate dehydrogenase (SDH), an enzyme complex (also referred to as respiratory complex II) that is a component of both the tricarboxylic acid (TCA) cycle and the mitochondrial electron transport chain, and which couples the oxidation of succinate to fumarate with the reduction of ubiquinone (coenzyme Q) to ubiquinol. Promotes maturation of the iron-sulfur protein subunit Sdhb of the SDH catalytic dimer, protecting it from the deleterious effects of oxidants. May act together with SDHAF3. Contributes to iron-sulfur cluster incorporation into SDHB by binding to SDHB and recruiting the iron-sulfur transfer complex formed by HSC20, HSPA9 and ISCU through direct binding to HSC20. The polypeptide is Succinate dehydrogenase assembly factor 1, mitochondrial (Mus musculus (Mouse)).